Reading from the N-terminus, the 374-residue chain is Histidinol-phosphate aminotransferase 1 (374 aa).

Residue Lys232 is modified to N6-(pyridoxal phosphate)lysine.

This sequence belongs to the class-II pyridoxal-phosphate-dependent aminotransferase family. Histidinol-phosphate aminotransferase subfamily. In terms of assembly, homodimer. Pyridoxal 5'-phosphate serves as cofactor.

The catalysed reaction is L-histidinol phosphate + 2-oxoglutarate = 3-(imidazol-4-yl)-2-oxopropyl phosphate + L-glutamate. Its pathway is amino-acid biosynthesis; L-histidine biosynthesis; L-histidine from 5-phospho-alpha-D-ribose 1-diphosphate: step 7/9. The sequence is that of Histidinol-phosphate aminotransferase 1 (hisC1) from Ralstonia nicotianae (strain ATCC BAA-1114 / GMI1000) (Ralstonia solanacearum).